Reading from the N-terminus, the 229-residue chain is tRNA (guanine-N(7)-)-methyltransferase (229 aa).

S-adenosyl-L-methionine is bound by residues E59, E84, D111, and D134. The active site involves D134. Residues K138, D170, and 205-208 (TKFE) contribute to the substrate site.

The protein belongs to the class I-like SAM-binding methyltransferase superfamily. TrmB family.

The catalysed reaction is guanosine(46) in tRNA + S-adenosyl-L-methionine = N(7)-methylguanosine(46) in tRNA + S-adenosyl-L-homocysteine. It functions in the pathway tRNA modification; N(7)-methylguanine-tRNA biosynthesis. Catalyzes the formation of N(7)-methylguanine at position 46 (m7G46) in tRNA. In Nitrosospira multiformis (strain ATCC 25196 / NCIMB 11849 / C 71), this protein is tRNA (guanine-N(7)-)-methyltransferase.